The primary structure comprises 160 residues: Transcription elongation factor GreA 2 (160 aa).

The stretch at 9-73 forms a coiled coil; sequence MTEEGKVKLE…RIKTVEHMLQ (65 aa).

Belongs to the GreA/GreB family.

Functionally, necessary for efficient RNA polymerase transcription elongation past template-encoded arresting sites. The arresting sites in DNA have the property of trapping a certain fraction of elongating RNA polymerases that pass through, resulting in locked ternary complexes. Cleavage of the nascent transcript by cleavage factors such as GreA or GreB allows the resumption of elongation from the new 3'terminus. GreA releases sequences of 2 to 3 nucleotides. In Lactiplantibacillus plantarum (strain ATCC BAA-793 / NCIMB 8826 / WCFS1) (Lactobacillus plantarum), this protein is Transcription elongation factor GreA 2.